Reading from the N-terminus, the 165-residue chain is Destrin (165 aa).

A2 is subject to N-acetylalanine. At S3 the chain carries Phosphoserine. An ADF-H domain is found at 4 to 153 (GVQVADEVCR…NRTCIAEKLG (150 aa)). K19 is modified (N6-acetyllysine). The Nuclear localization signal signature appears at 30 to 34 (KKRKK).

The protein belongs to the actin-binding proteins ADF family. Post-translationally, ISGylated. Widely expressed. Not found in skeletal muscle.

In terms of biological role, actin-depolymerizing protein. Severs actin filaments (F-actin) and binds to actin monomers (G-actin). Acts in a pH-independent manner. The chain is Destrin (Dstn) from Mus musculus (Mouse).